Here is a 276-residue protein sequence, read N- to C-terminus: Elongation factor Ts, mitochondrial (276 aa).

It belongs to the EF-Ts family.

The protein resides in the mitochondrion. In terms of biological role, associates with the EF-Tu.GDP complex and induces the exchange of GDP to GTP. It remains bound to the aminoacyl-tRNA.EF-Tu.GTP complex up to the GTP hydrolysis stage on the ribosome. The sequence is that of Elongation factor Ts, mitochondrial from Leishmania infantum.